The chain runs to 535 residues: CTP synthase (535 aa).

The segment at 1 to 267 is amidoligase domain; it reads MTKYIFVTGG…DQIVCDHLKL (267 aa). Residue Ser13 coordinates CTP. Ser13 contacts UTP. 14–19 is an ATP binding site; the sequence is SLGKGI. Tyr54 provides a ligand contact to L-glutamine. An ATP-binding site is contributed by Asp71. The Mg(2+) site is built by Asp71 and Glu141. Residues 148–150, 188–193, and Lys224 each bind CTP; these read DIE and KTKPTQ. UTP-binding positions include 188 to 193 and Lys224; that span reads KTKPTQ. Residue 240 to 242 coordinates ATP; sequence RDA. The Glutamine amidotransferase type-1 domain maps to 292–534; that stretch reads KIALVGKYVE…VSASITNKES (243 aa). An L-glutamine-binding site is contributed by Gly354. Catalysis depends on Cys381, which acts as the Nucleophile; for glutamine hydrolysis. Residues 382–385, Glu405, and Arg462 each bind L-glutamine; that span reads LGMQ. Catalysis depends on residues His507 and Glu509.

It belongs to the CTP synthase family. As to quaternary structure, homotetramer.

The enzyme catalyses UTP + L-glutamine + ATP + H2O = CTP + L-glutamate + ADP + phosphate + 2 H(+). The catalysed reaction is L-glutamine + H2O = L-glutamate + NH4(+). It catalyses the reaction UTP + NH4(+) + ATP = CTP + ADP + phosphate + 2 H(+). It functions in the pathway pyrimidine metabolism; CTP biosynthesis via de novo pathway; CTP from UDP: step 2/2. Its activity is regulated as follows. Allosterically activated by GTP, when glutamine is the substrate; GTP has no effect on the reaction when ammonia is the substrate. The allosteric effector GTP functions by stabilizing the protein conformation that binds the tetrahedral intermediate(s) formed during glutamine hydrolysis. Inhibited by the product CTP, via allosteric rather than competitive inhibition. Its function is as follows. Catalyzes the ATP-dependent amination of UTP to CTP with either L-glutamine or ammonia as the source of nitrogen. Regulates intracellular CTP levels through interactions with the four ribonucleotide triphosphates. This Bacillus mycoides (strain KBAB4) (Bacillus weihenstephanensis) protein is CTP synthase.